Here is a 264-residue protein sequence, read N- to C-terminus: 3-methyl-2-oxobutanoate hydroxymethyltransferase (264 aa).

Mg(2+)-binding residues include Asp-45 and Asp-84. 3-methyl-2-oxobutanoate-binding positions include 45–46, Asp-84, and Lys-112; that span reads DS. Glu-114 serves as a coordination point for Mg(2+). Glu-181 (proton acceptor) is an active-site residue.

The protein belongs to the PanB family. As to quaternary structure, homodecamer; pentamer of dimers. Mg(2+) is required as a cofactor.

The protein localises to the cytoplasm. It carries out the reaction 3-methyl-2-oxobutanoate + (6R)-5,10-methylene-5,6,7,8-tetrahydrofolate + H2O = 2-dehydropantoate + (6S)-5,6,7,8-tetrahydrofolate. It functions in the pathway cofactor biosynthesis; (R)-pantothenate biosynthesis; (R)-pantoate from 3-methyl-2-oxobutanoate: step 1/2. In terms of biological role, catalyzes the reversible reaction in which hydroxymethyl group from 5,10-methylenetetrahydrofolate is transferred onto alpha-ketoisovalerate to form ketopantoate. This is 3-methyl-2-oxobutanoate hydroxymethyltransferase from Photobacterium profundum (strain SS9).